Consider the following 874-residue polypeptide: Leucine--tRNA ligase (874 aa).

The 'HIGH' region signature appears at 43–53 (PYPSGRIHIGH). Positions 630-634 (KMSKS) match the 'KMSKS' region motif. An ATP-binding site is contributed by Lys633.

The protein belongs to the class-I aminoacyl-tRNA synthetase family.

The protein localises to the cytoplasm. It catalyses the reaction tRNA(Leu) + L-leucine + ATP = L-leucyl-tRNA(Leu) + AMP + diphosphate. The sequence is that of Leucine--tRNA ligase from Bradyrhizobium sp. (strain ORS 278).